A 319-amino-acid chain; its full sequence is Methionyl-tRNA formyltransferase (319 aa).

112-115 (SILP) lines the (6S)-5,6,7,8-tetrahydrofolate pocket.

Belongs to the Fmt family.

It carries out the reaction L-methionyl-tRNA(fMet) + (6R)-10-formyltetrahydrofolate = N-formyl-L-methionyl-tRNA(fMet) + (6S)-5,6,7,8-tetrahydrofolate + H(+). Functionally, attaches a formyl group to the free amino group of methionyl-tRNA(fMet). The formyl group appears to play a dual role in the initiator identity of N-formylmethionyl-tRNA by promoting its recognition by IF2 and preventing the misappropriation of this tRNA by the elongation apparatus. This chain is Methionyl-tRNA formyltransferase, found in Shewanella denitrificans (strain OS217 / ATCC BAA-1090 / DSM 15013).